Reading from the N-terminus, the 354-residue chain is Src kinase-associated phosphoprotein 1 (354 aa).

In terms of domain architecture, PH spans asparagine 107–lysine 210. Residues tyrosine 142 and tyrosine 236 each carry the phosphotyrosine modification. Phosphotyrosine; by FYN occurs at positions 267 and 290. The interaction with FYB1 stretch occupies residues arginine 285 to tyrosine 290. Residues aspartate 289–glutamate 350 form the SH3 domain.

Belongs to the SKAP family. In terms of assembly, homodimer. Interacts with FYN. Interacts with PTPRC. Interacts with GRB2 when phosphorylated on Tyr-267. Interacts with FYB1, which is required for SKAP2 protein stability. Part of a complex consisting of SKAP1, FYB1 and CLNK. Interacts with RASGRP1. Interacts with FYB2. Phosphorylated on tyrosines. Phosphorylation by FYN on Tyr-267 is required for GRB2 interaction. Phosphorylation by FYN on Tyr-290 abolishes interaction with FYB1. Tyr-236 is dephosphorylated by PTPRC. As to expression, expressed in mast cells (at protein level).

The protein localises to the cytoplasm. It localises to the nucleus. It is found in the cell membrane. Its function is as follows. Positively regulates T-cell receptor signaling by enhancing the MAP kinase pathway. Required for optimal conjugation between T-cells and antigen-presenting cells by promoting the clustering of integrin ITGAL on the surface of T-cells. May be involved in high affinity immunoglobulin epsilon receptor signaling in mast cells. The protein is Src kinase-associated phosphoprotein 1 (Skap1) of Rattus norvegicus (Rat).